Here is a 261-residue protein sequence, read N- to C-terminus: MLLALDAGNSNITIGAFEGSDLVCQWRLRTVHDQTADEWGILLRNLFSPAGLDIRRVDGIIISSVVPPIDSTLAFMTQRYFHTNAMFVGPHTDIGLEIRYDNPNEVGADRLVNGVAGFYKYGGPCVVVDMGTTINFDCISAAGEYLGGSIAVGIGISINALFSKTARLPKVDFRRPKNVIGTNTVASIQSGLYYGAIGMIDGILERVISQLGPETKAIATGGQAHMIVEGSRYLKTYDEHLTLQGLQMIWERNHPEAPQSE.

ATP is bound at residue 6–13; that stretch reads DAGNSNIT. Substrate-binding positions include Y100 and 107–110; that span reads GADR. Catalysis depends on D109, which acts as the Proton acceptor. Residue D129 participates in K(+) binding. T132 is a binding site for ATP. T184 contacts substrate.

This sequence belongs to the type III pantothenate kinase family. In terms of assembly, homodimer. NH4(+) is required as a cofactor. The cofactor is K(+).

It is found in the cytoplasm. The enzyme catalyses (R)-pantothenate + ATP = (R)-4'-phosphopantothenate + ADP + H(+). It functions in the pathway cofactor biosynthesis; coenzyme A biosynthesis; CoA from (R)-pantothenate: step 1/5. Its function is as follows. Catalyzes the phosphorylation of pantothenate (Pan), the first step in CoA biosynthesis. This chain is Type III pantothenate kinase, found in Solibacter usitatus (strain Ellin6076).